A 61-amino-acid chain; its full sequence is Protein translocase subunit SecE (61 aa).

A helical transmembrane segment spans residues 38 to 58 (GIGMILIGLIGLVIRMIGYLI).

The protein belongs to the SecE/SEC61-gamma family. As to quaternary structure, component of the Sec protein translocase complex. Heterotrimer consisting of SecY (alpha), SecG (beta) and SecE (gamma) subunits. The heterotrimers can form oligomers, although 1 heterotrimer is thought to be able to translocate proteins. Interacts with the ribosome. May interact with SecDF, and other proteins may be involved.

The protein resides in the cell membrane. In terms of biological role, essential subunit of the Sec protein translocation channel SecYEG. Clamps together the 2 halves of SecY. May contact the channel plug during translocation. The sequence is that of Protein translocase subunit SecE from Thermococcus onnurineus (strain NA1).